Here is a 521-residue protein sequence, read N- to C-terminus: Ribonuclease Y (521 aa).

Residues 5–25 form a helical membrane-spanning segment; it reads MMTMILAVIAAAIGFLIGNLL. The region spanning 211 to 271 is the KH domain; sequence TVSVVALPSD…VRREVAKLSL (61 aa). The HD domain occupies 337-430; that stretch reads VYQHSLEVAF…VQAADALSGA (94 aa).

Belongs to the RNase Y family.

The protein resides in the cell membrane. Its function is as follows. Endoribonuclease that initiates mRNA decay. The sequence is that of Ribonuclease Y from Geotalea uraniireducens (strain Rf4) (Geobacter uraniireducens).